The chain runs to 120 residues: DNA-directed RNA polymerase II subunit rpb11 (120 aa).

The protein belongs to the archaeal Rpo11/eukaryotic RPB11/RPC19 RNA polymerase subunit family. In terms of assembly, component of the RNA polymerase II (Pol II) complex consisting of 12 subunits.

The protein localises to the nucleus. Its function is as follows. DNA-dependent RNA polymerase catalyzes the transcription of DNA into RNA using the four ribonucleoside triphosphates as substrates. Component of RNA polymerase II which synthesizes mRNA precursors and many functional non-coding RNAs. Pol II is the central component of the basal RNA polymerase II transcription machinery. It is composed of mobile elements that move relative to each other. RPB11 is part of the core element with the central large cleft. The polypeptide is DNA-directed RNA polymerase II subunit rpb11 (polr2j) (Dictyostelium discoideum (Social amoeba)).